The following is a 368-amino-acid chain: Ferredoxin--NADP reductase (368 aa).

Residues D56, Q64, Y69, V109, F144, D310, and T351 each coordinate FAD.

It belongs to the ferredoxin--NADP reductase type 2 family. In terms of assembly, homodimer. FAD is required as a cofactor.

The enzyme catalyses 2 reduced [2Fe-2S]-[ferredoxin] + NADP(+) + H(+) = 2 oxidized [2Fe-2S]-[ferredoxin] + NADPH. This chain is Ferredoxin--NADP reductase, found in Leptothrix cholodnii (strain ATCC 51168 / LMG 8142 / SP-6) (Leptothrix discophora (strain SP-6)).